Here is a 171-residue protein sequence, read N- to C-terminus: uncharacterized protein (171 aa).

The segment at Thr-56–Met-83 is disordered. Polar residues predominate over residues Val-57 to Ala-77. One can recognise a J domain in the interval Lys-113 to Phe-170.

This is an uncharacterized protein from Sinorhizobium sp.